A 118-amino-acid polypeptide reads, in one-letter code: Small ribosomal subunit protein uS13 (118 aa).

Residues 94-118 (GLPLRGQRTKTNARTRKGPRKPIRK) are disordered.

Belongs to the universal ribosomal protein uS13 family. Part of the 30S ribosomal subunit. Forms a loose heterodimer with protein S19. Forms two bridges to the 50S subunit in the 70S ribosome.

Located at the top of the head of the 30S subunit, it contacts several helices of the 16S rRNA. In the 70S ribosome it contacts the 23S rRNA (bridge B1a) and protein L5 of the 50S subunit (bridge B1b), connecting the 2 subunits; these bridges are implicated in subunit movement. Contacts the tRNAs in the A and P-sites. The sequence is that of Small ribosomal subunit protein uS13 from Chromohalobacter salexigens (strain ATCC BAA-138 / DSM 3043 / CIP 106854 / NCIMB 13768 / 1H11).